A 322-amino-acid polypeptide reads, in one-letter code: Ornithine carbamoyltransferase (322 aa).

Carbamoyl phosphate-binding positions include Ser-67–Thr-70, Gln-94, Arg-118, and His-145–Gln-148. L-ornithine contacts are provided by residues Asn-176, Asp-240, and Ser-244–Met-245. Carbamoyl phosphate contacts are provided by residues Cys-280–Leu-281 and Arg-308.

The protein belongs to the aspartate/ornithine carbamoyltransferase superfamily. OTCase family.

It is found in the cytoplasm. The enzyme catalyses carbamoyl phosphate + L-ornithine = L-citrulline + phosphate + H(+). Its pathway is amino-acid biosynthesis; L-arginine biosynthesis; L-arginine from L-ornithine and carbamoyl phosphate: step 1/3. In terms of biological role, reversibly catalyzes the transfer of the carbamoyl group from carbamoyl phosphate (CP) to the N(epsilon) atom of ornithine (ORN) to produce L-citrulline. The protein is Ornithine carbamoyltransferase of Oceanobacillus iheyensis (strain DSM 14371 / CIP 107618 / JCM 11309 / KCTC 3954 / HTE831).